The following is a 538-amino-acid chain: Solute carrier family 2, facilitated glucose transporter member 9 (538 aa).

Residues 1 to 34 (MDSRELALASLMCDTGGPGELSVGHQQRRTKKWS) are Cytoplasmic-facing. Serine 3 is subject to Phosphoserine. Residues 35–54 (FSLVVAALVGAFGSSFLYGY) traverse the membrane as a helical segment. N-linked (GlcNAc...) asparagine glycosylation is found at asparagine 55 and asparagine 71. At 55 to 88 (NLSVVNAPTPYIKAFYNGTWYRRHGQPIDPDTLT) the chain is on the extracellular side. A helical membrane pass occupies residues 89–109 (LLWSVTVSIFAIGGLVGTLMV). At 110–120 (KMIGKFLGRKS) the chain is on the cytoplasmic side. The chain crosses the membrane as a helical span at residues 121 to 143 (TLLVNNGFAISAALLMACSLRAG). The Extracellular segment spans residues 144–148 (TFEML). The helical transmembrane segment at 149–170 (IVGRFIMGVDGGIALSALPMYL) threads the bilayer. The Cytoplasmic portion of the chain corresponds to 171-181 (NEISPKEIRGS). Residues 182-200 (LGQVTAIFICIGVFSGQLL) traverse the membrane as a helical segment. At 201 to 211 (GLPELLGREST) the chain is on the extracellular side. Residues 212 to 233 (WPYLFGVIIVPALVQLASLPFL) form a helical membrane-spanning segment. Over 234–297 (PESPRYLLFE…LLRAPFVRWQ (64 aa)) the chain is Cytoplasmic. Residues 298–319 (VITVIITMASYQLCGLNAIWFY) traverse the membrane as a helical segment. At 320–333 (TNSIFGKAGIPQDK) the chain is on the extracellular side. The chain crosses the membrane as a helical span at residues 334–356 (IPYITLSTGGIETLAAIFSGLVI). Residues 357–362 (ERLGRR) are Cytoplasmic-facing. The chain crosses the membrane as a helical span at residues 363 to 385 (PLLIGGFGLMALFFGTLTATLTL). Topologically, residues 386–390 (QDQAP) are extracellular. The chain crosses the membrane as a helical span at residues 391-418 (WVPYLSIVCILAIIASFCSGPGGIPFIL). At 419-429 (TGEFFQQSERP) the chain is on the cytoplasmic side. A helical transmembrane segment spans residues 430-453 (AAFMIAGTVNWLSNFAVGLLFPFI). Residues 454–458 (QKSLD) are Extracellular-facing. Residues 459 to 480 (SYCFLVFATICIAGATYFYFVL) traverse the membrane as a helical segment. The Cytoplasmic portion of the chain corresponds to 481 to 538 (PETKNRTHAEISQAFAKRNKAQPPEVKADSAMTEEKANSQTEPDSSSTLDSYGQNKIV). Residues 495–538 (FAKRNKAQPPEVKADSAMTEEKANSQTEPDSSSTLDSYGQNKIV) form a disordered region. The segment covering 518-538 (NSQTEPDSSSTLDSYGQNKIV) has biased composition (polar residues).

It belongs to the major facilitator superfamily. Sugar transporter (TC 2.A.1.1) family. Post-translationally, N-glycosylated. Highly expressed in the intestine, with high expression in the jejunum and ileum, the segments of the intestine that perform the majority of urate excretion. Isoform 1: Widely expressed. Isoform 1: In kidney, expressed at low levels in proximal tubules. Isoform 2: Primarily expressed in liver and kidney; with specific expression in distal convoluted and connecting tubules of kidney.

It localises to the basolateral cell membrane. The protein localises to the apical cell membrane. It catalyses the reaction urate(out) = urate(in). In terms of biological role, high-capacity urate transporter, which may play a role in the urate reabsorption by proximal tubules. May have a residual high-affinity, low-capacity glucose and fructose transporter activity. Transports urate at rates 45- to 60-fold faster than glucose. Does not transport galactose. May mediate small uptake of adenine but not of other nucleobases. This Mus musculus (Mouse) protein is Solute carrier family 2, facilitated glucose transporter member 9.